A 359-amino-acid chain; its full sequence is Peptide chain release factor 1 (359 aa).

Gln236 is modified (N5-methylglutamine).

The protein belongs to the prokaryotic/mitochondrial release factor family. Post-translationally, methylated by PrmC. Methylation increases the termination efficiency of RF1.

The protein resides in the cytoplasm. In terms of biological role, peptide chain release factor 1 directs the termination of translation in response to the peptide chain termination codons UAG and UAA. This is Peptide chain release factor 1 from Streptococcus pyogenes serotype M12 (strain MGAS2096).